The primary structure comprises 520 residues: GMP synthase [glutamine-hydrolyzing] (520 aa).

The region spanning 9 to 202 (TVLIVDFGSQ…IHNIAGIKGD (194 aa)) is the Glutamine amidotransferase type-1 domain. The Nucleophile role is filled by cysteine 86. Catalysis depends on residues histidine 176 and glutamate 178. A GMPS ATP-PPase domain is found at 203–395 (WSMSAYRAKA…LGLPDSFIGR (193 aa)). Residue 230–236 (SGGVDSS) coordinates ATP.

Homodimer.

It catalyses the reaction XMP + L-glutamine + ATP + H2O = GMP + L-glutamate + AMP + diphosphate + 2 H(+). It functions in the pathway purine metabolism; GMP biosynthesis; GMP from XMP (L-Gln route): step 1/1. Catalyzes the synthesis of GMP from XMP. This is GMP synthase [glutamine-hydrolyzing] from Rhizobium rhizogenes (strain K84 / ATCC BAA-868) (Agrobacterium radiobacter).